The following is a 597-amino-acid chain: Aspartate--tRNA ligase (597 aa).

L-aspartate is bound at residue Glu173. Residues 197-200 (QLFK) are aspartate. Arg219 is a binding site for L-aspartate. Residues 219-221 (RDE) and Gln228 contribute to the ATP site. His449 provides a ligand contact to L-aspartate. Residue Glu483 coordinates ATP. Arg490 contacts L-aspartate. 535-538 (GLDR) is an ATP binding site.

Belongs to the class-II aminoacyl-tRNA synthetase family. Type 1 subfamily. As to quaternary structure, homodimer.

It is found in the cytoplasm. It catalyses the reaction tRNA(Asp) + L-aspartate + ATP = L-aspartyl-tRNA(Asp) + AMP + diphosphate. Functionally, catalyzes the attachment of L-aspartate to tRNA(Asp) in a two-step reaction: L-aspartate is first activated by ATP to form Asp-AMP and then transferred to the acceptor end of tRNA(Asp). In Shewanella pealeana (strain ATCC 700345 / ANG-SQ1), this protein is Aspartate--tRNA ligase.